Reading from the N-terminus, the 559-residue chain is Leucine-rich repeat protein soc-2 (559 aa).

Residues 1–17 (METSKEFEFRPAKETSR) are compositionally biased toward basic and acidic residues. Positions 1 to 55 (METSKEFEFRPAKETSRSKSPGGIVGRLSNFARNKARHSLSEKGSNSVGGSGGSG) are disordered. LRR repeat units follow at residues 74–95 (QDQR…IKEL), 97–118 (QLTE…IGQL), 120–141 (NLKK…LSSL), 143–164 (SLET…IYKI), 166–187 (SLET…IGNL), 189–210 (KLKM…IGKL), 212–233 (SLVV…IGEC), 235–257 (ALTQ…GKLT), 258–279 (NLVR…LESC), 281–302 (QLEE…LLTM), 305–326 (KIHT…GPQQ), 329–350 (PTVT…IFSK), 353–374 (RLTK…MGSW), 376–397 (SITE…IEKL), 399–420 (NLEI…IGNL), 422–443 (KLRE…IGFL), 445–466 (HLTK…IGNL), 468–489 (SLQD…IGHL), 491–513 (SLKS…LALC), and 515–536 (SLEI…ITAG).

It belongs to the SHOC2 family. As to quaternary structure, interacts with let-60.

Acts as a Ras effector and participates in MAPK pathway activation. Probably acts as a scaffolding protein in a protein phosphatase complex that specifically dephosphorylates Raf kinase and stimulates Raf activity at specialized signaling complexes upon Ras activation. Required for vulval development. Involved in fluid homeostasis. Plays a role in nicotinic acetylcholine receptor (nAChR)-mediated sensitivity to nicotine. This chain is Leucine-rich repeat protein soc-2 (soc-2), found in Caenorhabditis briggsae.